Reading from the N-terminus, the 186-residue chain is ATP synthase subunit b (186 aa).

Residues 28-48 (IVWSIIPFAVILFVFWKFVLP) traverse the membrane as a helical segment.

The protein belongs to the ATPase B chain family. F-type ATPases have 2 components, F(1) - the catalytic core - and F(0) - the membrane proton channel. F(1) has five subunits: alpha(3), beta(3), gamma(1), delta(1), epsilon(1). F(0) has three main subunits: a(1), b(2) and c(10-14). The alpha and beta chains form an alternating ring which encloses part of the gamma chain. F(1) is attached to F(0) by a central stalk formed by the gamma and epsilon chains, while a peripheral stalk is formed by the delta and b chains.

The protein resides in the cell membrane. F(1)F(0) ATP synthase produces ATP from ADP in the presence of a proton or sodium gradient. F-type ATPases consist of two structural domains, F(1) containing the extramembraneous catalytic core and F(0) containing the membrane proton channel, linked together by a central stalk and a peripheral stalk. During catalysis, ATP synthesis in the catalytic domain of F(1) is coupled via a rotary mechanism of the central stalk subunits to proton translocation. Functionally, component of the F(0) channel, it forms part of the peripheral stalk, linking F(1) to F(0). The sequence is that of ATP synthase subunit b from Corynebacterium jeikeium (strain K411).